The primary structure comprises 321 residues: MDLLFLGTSAGVPTKARNVSATAVIEASGSHWYLVDCGEGTQHQLLHTPLSVRDLRAIFITHVHGDHCFGLPGLLASAGMSGRTAPLDLVLPAALHDWVRLSLAASDSFLPFELRLLAVEQLGEWRSDTLAVSTVQLSHRVPSVAFVFTELNPEPRLDVQRLDAEGIPRGPLWGELAKGLTVEHAGRMLHGRDYLRASRPARRVIVCGDNDNPELLAEAAKDVDVLVHEATFTQPIIARTGVSFGHSSAAAVARFAETAGVRNLVLTHFSARYQPDPRRSPCIDEVREEAQVHYSGNLTLAQDLQRYHIGRDGCLGRVTGI.

Zn(2+) is bound by residues His62, His64, Asp66, His67, His139, Asp209, and His268. Asp66 acts as the Proton acceptor in catalysis.

Belongs to the RNase Z family. Homodimer. Zn(2+) is required as a cofactor.

It carries out the reaction Endonucleolytic cleavage of RNA, removing extra 3' nucleotides from tRNA precursor, generating 3' termini of tRNAs. A 3'-hydroxy group is left at the tRNA terminus and a 5'-phosphoryl group is left at the trailer molecule.. In terms of biological role, zinc phosphodiesterase, which displays some tRNA 3'-processing endonuclease activity. Probably involved in tRNA maturation, by removing a 3'-trailer from precursor tRNA. The chain is Ribonuclease Z from Pseudomonas putida (strain W619).